A 243-amino-acid chain; its full sequence is Tubulin-folding cofactor B (243 aa).

The CAP-Gly domain occupies 181–223 (RAESLGPGYWVGIQYDEPLGKHDGMVKGTRFFECPRLQGGMVR).

Belongs to the TBCB family. Supercomplex made of cofactors A to E. Cofactors A and D function by capturing and stabilizing tubulin in a quasi-native conformation. Cofactor E binds to the cofactor D-tubulin complex; interaction with cofactor C then causes the release of tubulin polypeptides that are committed to the native state. Interacts with TUBA6. As to expression, expressed in roots, stems, leaves, flowers and siliques.

It is found in the cytoplasm. Functionally, involved in control of cell division. Regulates probably the availability of alpha-tubulin for dimerization of alpha-/beta-tubulin, which is required for proper microtubule biogenesis. Decreased expression of TFCB results in enlarged mesophyll cells and leaf epidermal cells with bulged nuclei, increased ploidy and increased numbers of spindles and phragmoplasts. The chain is Tubulin-folding cofactor B (TFCB) from Arabidopsis thaliana (Mouse-ear cress).